The sequence spans 375 residues: 23S rRNA (uracil(747)-C(5))-methyltransferase RlmC (375 aa).

The [4Fe-4S] cluster site is built by Cys-3, Cys-11, Cys-14, and Cys-87. Gln-212, Phe-241, Glu-262, and Asn-307 together coordinate S-adenosyl-L-methionine. The Nucleophile role is filled by Cys-334.

Belongs to the class I-like SAM-binding methyltransferase superfamily. RNA M5U methyltransferase family. RlmC subfamily.

It carries out the reaction uridine(747) in 23S rRNA + S-adenosyl-L-methionine = 5-methyluridine(747) in 23S rRNA + S-adenosyl-L-homocysteine + H(+). Functionally, catalyzes the formation of 5-methyl-uridine at position 747 (m5U747) in 23S rRNA. This is 23S rRNA (uracil(747)-C(5))-methyltransferase RlmC from Escherichia coli O9:H4 (strain HS).